A 484-amino-acid polypeptide reads, in one-letter code: Probable cytosol aminopeptidase (484 aa).

2 residues coordinate Mn(2+): K256 and D261. K268 is an active-site residue. Mn(2+) contacts are provided by D279, D338, and E340. R342 is an active-site residue.

This sequence belongs to the peptidase M17 family. Mn(2+) is required as a cofactor.

It localises to the cytoplasm. The catalysed reaction is Release of an N-terminal amino acid, Xaa-|-Yaa-, in which Xaa is preferably Leu, but may be other amino acids including Pro although not Arg or Lys, and Yaa may be Pro. Amino acid amides and methyl esters are also readily hydrolyzed, but rates on arylamides are exceedingly low.. It carries out the reaction Release of an N-terminal amino acid, preferentially leucine, but not glutamic or aspartic acids.. In terms of biological role, presumably involved in the processing and regular turnover of intracellular proteins. Catalyzes the removal of unsubstituted N-terminal amino acids from various peptides. The chain is Probable cytosol aminopeptidase from Methylibium petroleiphilum (strain ATCC BAA-1232 / LMG 22953 / PM1).